The sequence spans 272 residues: Type III pantothenate kinase (272 aa).

6-13 (NVNNTNTL) contacts ATP. Substrate is bound at residue 113-116 (GADR). Asp115 serves as the catalytic Proton acceptor. K(+) is bound at residue Asp135. Thr138 is an ATP binding site. Residue Thr190 coordinates substrate.

The protein belongs to the type III pantothenate kinase family. In terms of assembly, homodimer. NH4(+) is required as a cofactor. Requires K(+) as cofactor.

The protein localises to the cytoplasm. It carries out the reaction (R)-pantothenate + ATP = (R)-4'-phosphopantothenate + ADP + H(+). The protein operates within cofactor biosynthesis; coenzyme A biosynthesis; CoA from (R)-pantothenate: step 1/5. In terms of biological role, catalyzes the phosphorylation of pantothenate (Pan), the first step in CoA biosynthesis. In Acidobacterium capsulatum (strain ATCC 51196 / DSM 11244 / BCRC 80197 / JCM 7670 / NBRC 15755 / NCIMB 13165 / 161), this protein is Type III pantothenate kinase.